A 445-amino-acid chain; its full sequence is Probable D-serine dehydratase (445 aa).

Lys116 is subject to N6-(pyridoxal phosphate)lysine.

The protein belongs to the serine/threonine dehydratase family. DsdA subfamily. The cofactor is pyridoxal 5'-phosphate.

It catalyses the reaction D-serine = pyruvate + NH4(+). The chain is Probable D-serine dehydratase from Bacillus mycoides (strain KBAB4) (Bacillus weihenstephanensis).